The following is a 420-amino-acid chain: UDP-N-acetylglucosamine 1-carboxyvinyltransferase 2 (420 aa).

22–23 contributes to the phosphoenolpyruvate binding site; that stretch reads KN. A UDP-N-acetyl-alpha-D-glucosamine-binding site is contributed by R92. The active-site Proton donor is C116. A 2-(S-cysteinyl)pyruvic acid O-phosphothioketal modification is found at C116. UDP-N-acetyl-alpha-D-glucosamine is bound by residues 121-125, D307, and I329; that span reads RPIDL.

The protein belongs to the EPSP synthase family. MurA subfamily.

Its subcellular location is the cytoplasm. It carries out the reaction phosphoenolpyruvate + UDP-N-acetyl-alpha-D-glucosamine = UDP-N-acetyl-3-O-(1-carboxyvinyl)-alpha-D-glucosamine + phosphate. It participates in cell wall biogenesis; peptidoglycan biosynthesis. Its function is as follows. Cell wall formation. Adds enolpyruvyl to UDP-N-acetylglucosamine. This is UDP-N-acetylglucosamine 1-carboxyvinyltransferase 2 from Streptococcus thermophilus (strain ATCC BAA-250 / LMG 18311).